Reading from the N-terminus, the 96-residue chain is Small ribosomal subunit protein bS20 (96 aa).

It belongs to the bacterial ribosomal protein bS20 family.

Binds directly to 16S ribosomal RNA. The sequence is that of Small ribosomal subunit protein bS20 from Anaplasma marginale (strain St. Maries).